The primary structure comprises 261 residues: MKKRKIHHSDDEEDDTFYYRYSSVAAPPPSNPKHQPSSSAKSSAPGGGSGGLAPSKSTLYVSNLDFSLTNSDIHTLFSTFGKVARVTVLKDRHTRQSRGVAFVLYVSREDAAKAARSMDAKILNGRKLTVSIAADNGRASEFIKKRVYKDKSRCYECGDEGHLSYECPKNQLGPRERPPPPKKRGRRKEEEGEAEEISWSAAAPSLAVAEEEFEEENWASVVDNEAGERLRKREAEEEEERRMKRKEKKVSYFSDESDDED.

Residues 18 to 51 (YYRYSSVAAPPPSNPKHQPSSSAKSSAPGGGSGG) are disordered. Residues 57 to 135 (STLYVSNLDF…RKLTVSIAAD (79 aa)) enclose the RRM domain. A CCHC-type zinc finger spans residues 153-169 (RCYECGDEGHLSYECPK). Positions 165-261 (YECPKNQLGP…YFSDESDDED (97 aa)) are disordered. The span at 226–235 (AGERLRKREA) shows a compositional bias: basic and acidic residues.

In terms of assembly, component of the U11/U12 snRNPs that are part of the U12-type spliceosome. As to expression, ubiquitous. Abundantly expressed in the shoot apical neristem.

The protein resides in the nucleus. In terms of biological role, RNA chaperone required for proper U12 intron splicing and for normal growth and development of plants. Mainly responsible for meristem activity. Plays a role in regulating cell division. This Arabidopsis thaliana (Mouse-ear cress) protein is U11/U12 small nuclear ribonucleoprotein 31 kDa protein (SNRNP31).